The chain runs to 437 residues: Immunoglobulin superfamily member 11 (437 aa).

The N-terminal stretch at 1-22 is a signal peptide; the sequence is MTCRGSPLAPLLLFSLHGVAAS. The Ig-like V-type domain maps to 23–136; the sequence is LEVSESPGSV…DRGGRNIGVT (114 aa). Over 23 to 241 the chain is Extracellular; that stretch reads LEVSESPGSV…VISPQPRSIG (219 aa). Cystine bridges form between cysteine 44-cysteine 120 and cysteine 165-cysteine 215. Asparagine 102 is a glycosylation site (N-linked (GlcNAc...) asparagine). An Ig-like C2-type domain is found at 144 to 234; the sequence is PSAPHCQIQG…TCLLDLQVIS (91 aa). Residues 242–262 traverse the membrane as a helical segment; it reads LIAGAIGTGAVIIIFCIALIL. At 263-437 the chain is on the cytoplasmic side; sequence GAFFYWRSKN…PAQSRAGSLV (175 aa). Arginine 379 is modified (omega-N-methylarginine). The disordered stretch occupies residues 382 to 405; that stretch reads SLPAVSRSNGSVSRKARPPPVPSL.

In terms of processing, N-glycosylated.

It is found in the cell membrane. In terms of biological role, functions as a cell adhesion molecule through homophilic interaction. Stimulates cell growth. In Bos taurus (Bovine), this protein is Immunoglobulin superfamily member 11 (IGSF11).